The chain runs to 368 residues: F-box/kelch-repeat protein At5g51250 (368 aa).

The F-box domain occupies 1–44 (MSSLPDDLLLSIFARISRLYYPTLSLVSKSFRSLLASPDLYKAR). Kelch repeat units follow at residues 116-163 (DIYN…VLDR), 165-218 (IYVA…CIDG), and 260-304 (LFYI…YGGK).

The polypeptide is F-box/kelch-repeat protein At5g51250 (Arabidopsis thaliana (Mouse-ear cress)).